A 149-amino-acid polypeptide reads, in one-letter code: Pleckstrin homology domain-containing family J member 1 (149 aa).

Residues Arg-15 to Tyr-108 enclose the PH domain.

The polypeptide is Pleckstrin homology domain-containing family J member 1 (plekhj1) (Xenopus tropicalis (Western clawed frog)).